Reading from the N-terminus, the 293-residue chain is 4-hydroxybenzoate octaprenyltransferase (293 aa).

8 helical membrane-spanning segments follow: residues 41–61 (FAAA…LGVI), 98–118 (TEAK…DLLL), 122–142 (TFLL…MKRF), 145–165 (LPQV…YGAV), 167–187 (ESLP…TVAY), 218–238 (IIAL…WISQ), 241–261 (WGYF…CWLT), and 272–292 (AFLN…VGIY).

The protein belongs to the UbiA prenyltransferase family. Mg(2+) is required as a cofactor.

It localises to the cell inner membrane. It carries out the reaction all-trans-octaprenyl diphosphate + 4-hydroxybenzoate = 4-hydroxy-3-(all-trans-octaprenyl)benzoate + diphosphate. The protein operates within cofactor biosynthesis; ubiquinone biosynthesis. Its function is as follows. Catalyzes the prenylation of para-hydroxybenzoate (PHB) with an all-trans polyprenyl group. Mediates the second step in the final reaction sequence of ubiquinone-8 (UQ-8) biosynthesis, which is the condensation of the polyisoprenoid side chain with PHB, generating the first membrane-bound Q intermediate 3-octaprenyl-4-hydroxybenzoate. The polypeptide is 4-hydroxybenzoate octaprenyltransferase (Actinobacillus pleuropneumoniae serotype 5b (strain L20)).